A 358-amino-acid polypeptide reads, in one-letter code: MSIADETVSWNQDSILSRDLFSATSAELCYENLNRSCVRSPYSPGPRLILYAVFGFGAVLAVCGNLLVMTSILHFRQLHSPANFLVASLACADFLVGVMVMPFSMVRSVEGCWYFGDSYCKLHTCFDVSFCYCSLFHLCFISVDRYIAVSDPLAYPTRFTASVSGKCITFSWLLSISYGFSLIYTGASEAGLEDLVSSLTCVGGCQIAVNQTWVFINFSVFLIPTLVMITVYSKIFLIAKQQAQNIEKMSKQTARASDSYKDRVAKRERKAAKTLGIAVAAFLLSWLPYFIDSFIDAFLGFITPTYVYEILVWIVYYNSAMNPLIYAFFYPWFRKAIKLTVTGKILRENSSTTNLFSE.

Topologically, residues 1 to 47 are extracellular; the sequence is MSIADETVSWNQDSILSRDLFSATSAELCYENLNRSCVRSPYSPGPR. A glycan (N-linked (GlcNAc...) asparagine) is linked at N34. Intrachain disulfides connect C37–C201 and C120–C205. Residues 48 to 68 form a helical membrane-spanning segment; the sequence is LILYAVFGFGAVLAVCGNLLV. Topologically, residues 69–83 are cytoplasmic; it reads MTSILHFRQLHSPAN. Residues 84-104 traverse the membrane as a helical segment; sequence FLVASLACADFLVGVMVMPFS. The Extracellular segment spans residues 105–121; it reads MVRSVEGCWYFGDSYCK. A helical membrane pass occupies residues 122–143; that stretch reads LHTCFDVSFCYCSLFHLCFISV. Topologically, residues 144–166 are cytoplasmic; it reads DRYIAVSDPLAYPTRFTASVSGK. A helical transmembrane segment spans residues 167–187; that stretch reads CITFSWLLSISYGFSLIYTGA. The Extracellular segment spans residues 188-212; it reads SEAGLEDLVSSLTCVGGCQIAVNQT. N-linked (GlcNAc...) asparagine glycosylation occurs at N210. The chain crosses the membrane as a helical span at residues 213 to 233; that stretch reads WVFINFSVFLIPTLVMITVYS. Residues 234–274 lie on the Cytoplasmic side of the membrane; it reads KIFLIAKQQAQNIEKMSKQTARASDSYKDRVAKRERKAAKT. The helical transmembrane segment at 275–295 threads the bilayer; that stretch reads LGIAVAAFLLSWLPYFIDSFI. The Extracellular portion of the chain corresponds to 296-309; sequence DAFLGFITPTYVYE. A helical membrane pass occupies residues 310-333; the sequence is ILVWIVYYNSAMNPLIYAFFYPWF. Over 334–358 the chain is Cytoplasmic; the sequence is RKAIKLTVTGKILRENSSTTNLFSE.

This sequence belongs to the G-protein coupled receptor 1 family. In terms of tissue distribution, specifically expressed in neurons of the olfactory epithelium.

The protein localises to the cell membrane. Its function is as follows. Olfactory receptor activated by trace amines, such as N-methylpiperidine and N,N-dimethylcyclohexylamine. Trace amine compounds are enriched in animal body fluids and act on trace amine-associated receptors (TAARs) to elicit both intraspecific and interspecific innate behaviors. Ligand-binding causes a conformation change that triggers signaling via G(s)-class of G alpha proteins (GNAL or GNAS). This Mus musculus (Mouse) protein is Trace amine-associated receptor 7f.